The sequence spans 332 residues: Glycerol-3-phosphate dehydrogenase [NAD(P)+] (332 aa).

3 residues coordinate NADPH: W15, R35, and K108. 3 residues coordinate sn-glycerol 3-phosphate: K108, G137, and S139. A141 contributes to the NADPH binding site. Residues K192, D245, S255, R256, and N257 each coordinate sn-glycerol 3-phosphate. Residue K192 is the Proton acceptor of the active site. R256 contributes to the NADPH binding site. Residues L278 and E280 each coordinate NADPH.

The protein belongs to the NAD-dependent glycerol-3-phosphate dehydrogenase family.

Its subcellular location is the cytoplasm. The enzyme catalyses sn-glycerol 3-phosphate + NAD(+) = dihydroxyacetone phosphate + NADH + H(+). It catalyses the reaction sn-glycerol 3-phosphate + NADP(+) = dihydroxyacetone phosphate + NADPH + H(+). The protein operates within membrane lipid metabolism; glycerophospholipid metabolism. Functionally, catalyzes the reduction of the glycolytic intermediate dihydroxyacetone phosphate (DHAP) to sn-glycerol 3-phosphate (G3P), the key precursor for phospholipid synthesis. The chain is Glycerol-3-phosphate dehydrogenase [NAD(P)+] from Methylobacterium radiotolerans (strain ATCC 27329 / DSM 1819 / JCM 2831 / NBRC 15690 / NCIMB 10815 / 0-1).